We begin with the raw amino-acid sequence, 512 residues long: Sucrose-6-phosphate hydrolase (512 aa).

Residues 40 to 43 (WMND), Gln-59, Trp-67, 102 to 103 (FS), 165 to 166 (RD), Glu-229, and Trp-311 contribute to the substrate site. The active site involves Asp-43.

Belongs to the glycosyl hydrolase 32 family.

Its subcellular location is the cytoplasm. It carries out the reaction Hydrolysis of terminal non-reducing beta-D-fructofuranoside residues in beta-D-fructofuranosides.. It participates in glycan biosynthesis; sucrose metabolism. In Zymomonas mobilis subsp. mobilis (strain ATCC 31821 / ZM4 / CP4), this protein is Sucrose-6-phosphate hydrolase (sacA).